The chain runs to 104 residues: NADH-quinone oxidoreductase subunit K (104 aa).

The next 3 membrane-spanning stretches (helical) occupy residues 4 to 24 (VPASAYLTLAIILFCIGLFGA), 31 to 51 (VIVLVCIELMLNAANLNLVAF), and 67 to 87 (LFTMAVAAAEAAVGLAILIAL).

The protein belongs to the complex I subunit 4L family. As to quaternary structure, NDH-1 is composed of 14 different subunits. Subunits NuoA, H, J, K, L, M, N constitute the membrane sector of the complex.

It is found in the cell membrane. It catalyses the reaction a quinone + NADH + 5 H(+)(in) = a quinol + NAD(+) + 4 H(+)(out). Functionally, NDH-1 shuttles electrons from NADH, via FMN and iron-sulfur (Fe-S) centers, to quinones in the respiratory chain. The immediate electron acceptor for the enzyme in this species is believed to be a menaquinone. Couples the redox reaction to proton translocation (for every two electrons transferred, four hydrogen ions are translocated across the cytoplasmic membrane), and thus conserves the redox energy in a proton gradient. The chain is NADH-quinone oxidoreductase subunit K from Bacillus cereus (strain AH820).